The sequence spans 89 residues: Elongation factor 1-beta (89 aa).

Belongs to the EF-1-beta/EF-1-delta family.

Promotes the exchange of GDP for GTP in EF-1-alpha/GDP, thus allowing the regeneration of EF-1-alpha/GTP that could then be used to form the ternary complex EF-1-alpha/GTP/AAtRNA. This chain is Elongation factor 1-beta, found in Methanosarcina barkeri (strain Fusaro / DSM 804).